The chain runs to 243 residues: UMP-CMP kinase 2 (243 aa).

Residue 69–74 coordinates ATP; sequence GSGKGT. Positions 89–118 are NMP; that stretch reads SAGDLLRSEISTGREKGELILNIIKEGKIV. Residues Arg95, 116–118, and 143–146 each bind a ribonucleoside 5'-phosphate; these read KIV and GFPR. Asn150 contacts CMP. An LID region spans residues 181 to 189; sequence GRNQGRVDD. Arg182 lines the ATP pocket. The a ribonucleoside 5'-phosphate site is built by Arg186 and Arg197.

This sequence belongs to the adenylate kinase family. UMP-CMP kinase subfamily. In terms of assembly, monomer. The cofactor is Mg(2+).

Its subcellular location is the cytoplasm. The protein resides in the nucleus. It catalyses the reaction UMP + ATP = UDP + ADP. The enzyme catalyses CMP + ATP = CDP + ADP. It carries out the reaction dCMP + ATP = dCDP + ADP. In terms of biological role, catalyzes the phosphorylation of pyrimidine nucleoside monophosphates at the expense of ATP. Plays an important role in de novo pyrimidine nucleotide biosynthesis. Has preference for UMP and CMP as phosphate acceptors. This is UMP-CMP kinase 2 from Oryza sativa subsp. japonica (Rice).